The primary structure comprises 322 residues: Lipoyl synthase (322 aa).

Residues 1-25 show a composition bias toward basic and acidic residues; the sequence is MSQRITIDHRSAPALRHPEKAHRPD. Residues 1–29 are disordered; sequence MSQRITIDHRSAPALRHPEKAHRPDNPIQ. Residues Cys61, Cys66, Cys72, Cys87, Cys91, Cys94, and Ser300 each contribute to the [4Fe-4S] cluster site. The Radical SAM core domain occupies 73 to 289; it reads WSQRHATMMI…AAAARSKGFL (217 aa).

It belongs to the radical SAM superfamily. Lipoyl synthase family. [4Fe-4S] cluster serves as cofactor.

It is found in the cytoplasm. The catalysed reaction is [[Fe-S] cluster scaffold protein carrying a second [4Fe-4S](2+) cluster] + N(6)-octanoyl-L-lysyl-[protein] + 2 oxidized [2Fe-2S]-[ferredoxin] + 2 S-adenosyl-L-methionine + 4 H(+) = [[Fe-S] cluster scaffold protein] + N(6)-[(R)-dihydrolipoyl]-L-lysyl-[protein] + 4 Fe(3+) + 2 hydrogen sulfide + 2 5'-deoxyadenosine + 2 L-methionine + 2 reduced [2Fe-2S]-[ferredoxin]. The protein operates within protein modification; protein lipoylation via endogenous pathway; protein N(6)-(lipoyl)lysine from octanoyl-[acyl-carrier-protein]: step 2/2. Functionally, catalyzes the radical-mediated insertion of two sulfur atoms into the C-6 and C-8 positions of the octanoyl moiety bound to the lipoyl domains of lipoate-dependent enzymes, thereby converting the octanoylated domains into lipoylated derivatives. The protein is Lipoyl synthase of Gluconobacter oxydans (strain 621H) (Gluconobacter suboxydans).